We begin with the raw amino-acid sequence, 148 residues long: 3-dehydroquinate dehydratase (148 aa).

Tyr24 serves as the catalytic Proton acceptor. The substrate site is built by Asn80, His86, and Asp93. The active-site Proton donor is His106. Residues 107 to 108 (IS) and Arg117 each bind substrate.

Belongs to the type-II 3-dehydroquinase family. Homododecamer.

It catalyses the reaction 3-dehydroquinate = 3-dehydroshikimate + H2O. It functions in the pathway metabolic intermediate biosynthesis; chorismate biosynthesis; chorismate from D-erythrose 4-phosphate and phosphoenolpyruvate: step 3/7. Catalyzes a trans-dehydration via an enolate intermediate. The chain is 3-dehydroquinate dehydratase from Acidovorax ebreus (strain TPSY) (Diaphorobacter sp. (strain TPSY)).